The following is an 83-amino-acid chain: NAD(P)H-quinone oxidoreductase subunit L (83 aa).

2 helical membrane passes run 15-35 (LLVL…VPLA) and 53-73 (LGIY…APFL).

Belongs to the complex I NdhL subunit family. NDH-1 can be composed of about 15 different subunits; different subcomplexes with different compositions have been identified which probably have different functions.

It localises to the cellular thylakoid membrane. It catalyses the reaction a plastoquinone + NADH + (n+1) H(+)(in) = a plastoquinol + NAD(+) + n H(+)(out). The enzyme catalyses a plastoquinone + NADPH + (n+1) H(+)(in) = a plastoquinol + NADP(+) + n H(+)(out). In terms of biological role, NDH-1 shuttles electrons from an unknown electron donor, via FMN and iron-sulfur (Fe-S) centers, to quinones in the respiratory and/or the photosynthetic chain. The immediate electron acceptor for the enzyme in this species is believed to be plastoquinone. Couples the redox reaction to proton translocation, and thus conserves the redox energy in a proton gradient. Cyanobacterial NDH-1 also plays a role in inorganic carbon-concentration. The protein is NAD(P)H-quinone oxidoreductase subunit L of Synechococcus sp. (strain CC9605).